The chain runs to 126 residues: Fluoride-specific ion channel FluC (126 aa).

4 consecutive transmembrane segments (helical) span residues 2-22 (LITV…RYLI), 37-57 (VGVL…VVLA), 65-85 (LSPF…AFSL), and 99-119 (AALY…LGMM). Gly-75 and Thr-78 together coordinate Na(+).

The protein belongs to the fluoride channel Fluc/FEX (TC 1.A.43) family.

The protein resides in the cell inner membrane. It carries out the reaction fluoride(in) = fluoride(out). With respect to regulation, na(+) is not transported, but it plays an essential structural role and its presence is essential for fluoride channel function. Fluoride-specific ion channel. Important for reducing fluoride concentration in the cell, thus reducing its toxicity. This chain is Fluoride-specific ion channel FluC, found in Ruegeria sp. (strain TM1040) (Silicibacter sp.).